We begin with the raw amino-acid sequence, 333 residues long: MDERLLSGESAYEDADLEYSLRPQTLRQYIGQDKAKHNLEVFIEAAKMREETLDHVLLYGPPGLGKTTLANIIANEMGVNVRTTSGPAIERPGDLAAVLTSLQPGDVLFIDEIHRLHRSIEEVLYPAMEDFCLDIVIGKGPSARSVRLDLPPFTLVGATTRAGALSAPLRDRFGVLSRLEYYTVDQLSAIVERTAEVFEVEIDSLAALEIARRARGTPRIANRLLRRVRDFAQVRGNGTVTMEITQMALELLQVDKLGLDHIDHKLLLGIIEKFRGGPVGLETVSATIGEESHTIEDVYEPYLLQIGFLQRTPRGRIVTPLAYEHFGMEMPKV.

The large ATPase domain (RuvB-L) stretch occupies residues 1–182 (MDERLLSGES…FGVLSRLEYY (182 aa)). ATP-binding positions include Leu21, Arg22, Gly63, Lys66, Thr67, Thr68, 129–131 (EDF), Arg172, Tyr182, and Arg219. Thr67 is a Mg(2+) binding site. Residues 183–253 (TVDQLSAIVE…ITQMALELLQ (71 aa)) are small ATPAse domain (RuvB-S). Residues 256–333 (KLGLDHIDHK…EHFGMEMPKV (78 aa)) are head domain (RuvB-H). Residues Arg311 and Arg316 each contribute to the DNA site.

The protein belongs to the RuvB family. As to quaternary structure, homohexamer. Forms an RuvA(8)-RuvB(12)-Holliday junction (HJ) complex. HJ DNA is sandwiched between 2 RuvA tetramers; dsDNA enters through RuvA and exits via RuvB. An RuvB hexamer assembles on each DNA strand where it exits the tetramer. Each RuvB hexamer is contacted by two RuvA subunits (via domain III) on 2 adjacent RuvB subunits; this complex drives branch migration. In the full resolvosome a probable DNA-RuvA(4)-RuvB(12)-RuvC(2) complex forms which resolves the HJ.

Its subcellular location is the cytoplasm. It carries out the reaction ATP + H2O = ADP + phosphate + H(+). In terms of biological role, the RuvA-RuvB-RuvC complex processes Holliday junction (HJ) DNA during genetic recombination and DNA repair, while the RuvA-RuvB complex plays an important role in the rescue of blocked DNA replication forks via replication fork reversal (RFR). RuvA specifically binds to HJ cruciform DNA, conferring on it an open structure. The RuvB hexamer acts as an ATP-dependent pump, pulling dsDNA into and through the RuvAB complex. RuvB forms 2 homohexamers on either side of HJ DNA bound by 1 or 2 RuvA tetramers; 4 subunits per hexamer contact DNA at a time. Coordinated motions by a converter formed by DNA-disengaged RuvB subunits stimulates ATP hydrolysis and nucleotide exchange. Immobilization of the converter enables RuvB to convert the ATP-contained energy into a lever motion, pulling 2 nucleotides of DNA out of the RuvA tetramer per ATP hydrolyzed, thus driving DNA branch migration. The RuvB motors rotate together with the DNA substrate, which together with the progressing nucleotide cycle form the mechanistic basis for DNA recombination by continuous HJ branch migration. Branch migration allows RuvC to scan DNA until it finds its consensus sequence, where it cleaves and resolves cruciform DNA. The sequence is that of Holliday junction branch migration complex subunit RuvB from Bacillus cereus (strain Q1).